Consider the following 201-residue polypeptide: 3-isopropylmalate dehydratase small subunit (201 aa).

Belongs to the LeuD family. LeuD type 1 subfamily. As to quaternary structure, heterodimer of LeuC and LeuD.

It catalyses the reaction (2R,3S)-3-isopropylmalate = (2S)-2-isopropylmalate. The protein operates within amino-acid biosynthesis; L-leucine biosynthesis; L-leucine from 3-methyl-2-oxobutanoate: step 2/4. In terms of biological role, catalyzes the isomerization between 2-isopropylmalate and 3-isopropylmalate, via the formation of 2-isopropylmaleate. The polypeptide is 3-isopropylmalate dehydratase small subunit (Shewanella woodyi (strain ATCC 51908 / MS32)).